The chain runs to 406 residues: Pyruvate dehydrogenase E1 component subunit beta-2, chloroplastic (406 aa).

A chloroplast-targeting transit peptide spans 1–44; that stretch reads MSSIIHGAGAATTTLSTFNSVDSKKLFVAPSRTNLSVRSQRYIV. Glu142 is a thiamine diphosphate binding site. Positions 195, 243, 244, and 248 each coordinate K(+).

As to quaternary structure, tetramer of 2 alpha and 2 beta subunits. The cofactor is thiamine diphosphate.

It is found in the plastid. The protein resides in the chloroplast. The catalysed reaction is N(6)-[(R)-lipoyl]-L-lysyl-[protein] + pyruvate + H(+) = N(6)-[(R)-S(8)-acetyldihydrolipoyl]-L-lysyl-[protein] + CO2. The pyruvate dehydrogenase complex catalyzes the overall conversion of pyruvate to acetyl-CoA and CO(2). It contains multiple copies of three enzymatic components: pyruvate dehydrogenase (E1), dihydrolipoamide acetyltransferase (E2) and lipoamide dehydrogenase (E3). The chain is Pyruvate dehydrogenase E1 component subunit beta-2, chloroplastic (PDH-E1 BETA) from Arabidopsis thaliana (Mouse-ear cress).